The chain runs to 358 residues: Methionine aminopeptidase 2 (358 aa).

Residue His-111 participates in substrate binding. A divalent metal cation-binding residues include Asp-131, Asp-142, and His-211. His-219 serves as a coordination point for substrate. Residues Glu-244 and Glu-339 each coordinate a divalent metal cation.

Belongs to the peptidase M24A family. Methionine aminopeptidase eukaryotic type 2 subfamily. Co(2+) serves as cofactor. Zn(2+) is required as a cofactor. It depends on Mn(2+) as a cofactor. The cofactor is Fe(2+).

Its subcellular location is the cytoplasm. The enzyme catalyses Release of N-terminal amino acids, preferentially methionine, from peptides and arylamides.. In terms of biological role, cotranslationally removes the N-terminal methionine from nascent proteins. The N-terminal methionine is often cleaved when the second residue in the primary sequence is small and uncharged (Met-Ala-, Cys, Gly, Pro, Ser, Thr, or Val). The chain is Methionine aminopeptidase 2 from Laccaria bicolor (strain S238N-H82 / ATCC MYA-4686) (Bicoloured deceiver).